Here is a 470-residue protein sequence, read N- to C-terminus: Neuronal acetylcholine receptor subunit beta-4 (470 aa).

The N-terminal stretch at 1–3 (STA) is a signal peptide. Residues 4–216 (ADAEEKLMNH…IIKRKPLFYT (213 aa)) lie on the Extracellular side of the membrane. 3 N-linked (GlcNAc...) asparagine glycosylation sites follow: asparagine 29, asparagine 118, and asparagine 146. Cysteine 133 and cysteine 147 are disulfide-bonded. The chain crosses the membrane as a helical span at residues 217-237 (INLIIPCVLITSLAILVFYLP). Residues 238-245 (SDCGEKMT) are Cytoplasmic-facing. Residue glutamate 242 participates in Na(+) binding. A helical transmembrane segment spans residues 246–266 (LCISVLLALTVFLLLISKIVP). The Extracellular segment spans residues 267–278 (PTSLDVPLIGKY). The helical transmembrane segment at 279–299 (LMFTMVLVTFSIVTSVCVLNV) threads the bilayer. Over 300 to 438 (HHRSPSTHTM…WKYVAMVVDR (139 aa)) the chain is Cytoplasmic. The chain crosses the membrane as a helical span at residues 439–459 (LFLWIFVLVCVLGTVGLFLQP). Topologically, residues 460 to 470 (LFQNHIAATNP) are extracellular.

It belongs to the ligand-gated ion channel (TC 1.A.9) family. Acetylcholine receptor (TC 1.A.9.1) subfamily. Beta-4/CHRNB4 sub-subfamily. Neuronal AChR is composed of two different types of subunits: alpha and beta. CHRNB4/Beta-4 subunit can be combined to CHRNA2/alpha-2, CHRNA3/alpha-3 or CHRNA4/alpha-4, CHRNA5/alpha-5 and CHRNB3/beta-3 to give rise to functional receptors.

Its subcellular location is the synaptic cell membrane. It localises to the cell membrane. The enzyme catalyses Ca(2+)(in) = Ca(2+)(out). The catalysed reaction is K(+)(in) = K(+)(out). It carries out the reaction Na(+)(in) = Na(+)(out). Its activity is regulated as follows. Activated by a myriad of ligands such as acetylcholine, cytisine, nicotine, choline and epibatidine. The heteropentamer CHRNA3:CHRNB4 activity is blocked by the alpha-conotoxin ImI and AuIB. In terms of biological role, component of neuronal acetylcholine receptors (nAChRs) that function as pentameric, ligand-gated cation channels with high calcium permeability among other activities. nAChRs are excitatory neurotrasnmitter receptors formed by a collection of nAChR subunits known to mediate synaptic transmission in the nervous system and the neuromuscular junction. Each nAchR subunit confers differential attributes to channel properties, including activation, deactivation and desensitization kinetics, pH sensitivity, cation permeability, and binding to allosteric modulators. CHRNB4 forms heteropentameric neuronal acetylcholine receptors with CHRNA2, CHRNA3 and CHRNA4, as well as CHRNA5 and CHRNB3 as accesory subunits. CHRNA3:CHRNB4 being predominant in neurons of the autonomic ganglia, it is known as ganglionic nicotinic receptor. CHRNA3:CHRNB4 or CHRNA3:CHRNA5:CHRNB4 play also an important role in the habenulo-interpeduncular tract, modulating the mesolimbic dopamine system and affecting reward circuits and addiction. Hypothalamic CHRNA3:CHRNB4 nAChR activation by nicotine leads to activation of POMC neurons and a decrease in food intake. The sequence is that of Neuronal acetylcholine receptor subunit beta-4 (CHRNB4) from Gallus gallus (Chicken).